A 232-amino-acid polypeptide reads, in one-letter code: MRVHRLPENFSLERARRAQLAIARMVLEEDSLPESVRRAAGVDVAFKGDYAFAAAVVVEYPSFSVVDYSVTRTEVRFPYVPTLLAFREVWPAYTALKRLKSEPDVLLVDGNGRLHPFKAGFACHLGVLVDKPTIGVAKKLLVGEVGSWKSGVAPVLYRGEVLGMAVKTSERSKPVFVSIGHKISLNTAVWIVRMFTKRGLRLPEPLRLAHLYATAYARGNMEEKDFYLDEPS.

Mg(2+) contacts are provided by aspartate 43 and aspartate 109.

Belongs to the endonuclease V family. Mg(2+) serves as cofactor.

It localises to the cytoplasm. It catalyses the reaction Endonucleolytic cleavage at apurinic or apyrimidinic sites to products with a 5'-phosphate.. Its function is as follows. DNA repair enzyme involved in the repair of deaminated bases. Selectively cleaves double-stranded DNA at the second phosphodiester bond 3' to a deoxyinosine leaving behind the intact lesion on the nicked DNA. The polypeptide is Endonuclease V (Thermofilum pendens (strain DSM 2475 / Hrk 5)).